Here is a 299-residue protein sequence, read N- to C-terminus: Probable lipid kinase YegS-like (299 aa).

The region spanning E2–H133 is the DAGKc domain. ATP contacts are provided by residues T40, G66–E72, and T95. Residues L215, D218, and L220 each coordinate Mg(2+). The Proton acceptor role is filled by E271.

This sequence belongs to the diacylglycerol/lipid kinase family. YegS lipid kinase subfamily. Requires Mg(2+) as cofactor. Ca(2+) serves as cofactor.

The protein localises to the cytoplasm. Functionally, probably phosphorylates lipids; the in vivo substrate is unknown. This is Probable lipid kinase YegS-like from Pectobacterium atrosepticum (strain SCRI 1043 / ATCC BAA-672) (Erwinia carotovora subsp. atroseptica).